Consider the following 1351-residue polypeptide: MNVYDKVLQFGSKKARARGMALNKLSRNRLEDIYAGSGPLVFGFGPIDMVDPGSLNPSIKTLDTVYVAAVQPDNQYVVHHFVPGRNEWVETDASTHQPTALVGVLVQDHKAKTREVEDLKSQLSQLRMEHEILRHEYERLKLKSPIVKPFKPLKVLLFSLLLGLLFAGVTNGARTGTCYAYDEEKDTCLYWEWKDSREVAWYDSYVTEALAIYNRACVYVRSKEFMTYLSLVFQTVFNWYFCATALAVYYMARAENPIVMFVTLALATLSQFQLLAVAVLPLLDFSATMGLWLSMVVFYMSQQISILVSFCVLVLSVMIGTFMADSEYAMMIKGHAVVFAIVCYSHVAMILNIPPWVVSLTMVCYRLWRVCFVFPAERLEIRSADGKVLHTVPTHPNWTAKVTRFVQSLRKGLRTSVAPTARIVPDGIAIVEAREGVGTCFRVKNNLVTSKHVVGSDDAVKIRWGAQEDMARVTYRHPTKDIALMALPTNLQTMPAYKFAKAITDGPIVMTAFDEANLLLVAVTEGVRVEDHMTYSVATRNGMSGAPITTVDGRVIAVHQTNTGFTGGAVIFVPEDIPEVRKISKREQELEDRVKQLEGMLNMDQAYVDSNLIVDLVREAVQREMKVLRTELANLGGFSQKKKGKNKSTKRKRKAVWTEEEYKAMLEKGFTRDQLRIMADAIRDQYYDDEDEQSEEEAGYPDWSDPGDSTDIENEWFGYEQSWKELEPAKSGVVVNTLPKDLVFKYSLDNYPISKQDIQAVAKELKIYEKAISDIISTSVSTDGKWKDDVDAQKILQELDGLWWGINHTLWEHGLMPFTQRRKRVQQPKKLQRGPEDPGPEECKLDYWEQLVEPSKEKFLVPPEYPLLGVVPLDRPISDFDAPVDNLLALLPEPESPDLGFEPAVWGPEAYVKSFEKFDFADPDPNIEKNYPREWAFANLVLHREFDFLADSVVKDITATSKNSESTPGFPKTYWWKTEAEYLAKRGYADYVSEWNRIRGGARPNVLWYLFLKKEILKSTKVRDADIRQIICSDPIFARIGCCFEEDQNERMKRRTKTRMPQCGWSPFFGGFNDRIQRLVAKGNPYWIEFDWTRYDGTIPSQIFKHIKNFRFSMLAKEYQTPELRNMYHWYVDNILRRYVCMPSGEITIQHKGNPSGQVSTTMDNNLVNVFLQAFEYAYLHPEKSMDELRKDWESYDSLIYGDDRLTTSPSVPNDYVTRVVAMYKDIFGMWVKPEKVKVSHSPVGLSFCGFVITHQDGQYLPVPAEEAKLLASLLRPTKKLENMDALYGKLLCYRILNHNLPNDNKFRNYILVALEVMARHYSSRGEEPPFYVTESMLDKLWRGGPKFDYG.

Positions 105-144 (LVQDHKAKTREVEDLKSQLSQLRMEHEILRHEYERLKLKS) form a coiled coil. The next 5 helical transmembrane spans lie at 153-173 (LKVL…TNGA), 231-251 (LVFQ…VYYM), 257-277 (PIVM…LLAV), 304-324 (ISIL…TFMA), and 337-357 (VVFA…PPWV). Residues histidine 452, aspartate 481, and serine 544 each act as charge relay system; for serine protease activity in the active site. The stretch at 579–635 (EVRKISKREQELEDRVKQLEGMLNMDQAYVDSNLIVDLVREAVQREMKVLRTELANL) forms a coiled coil. O-(5'-phospho-RNA)-tyrosine is present on tyrosine 662. A compositionally biased stretch (acidic residues) spans 687–699 (YDDEDEQSEEEAG). Disordered stretches follow at residues 687–708 (YDDE…DPGD) and 822–842 (RKRV…GPEE). Positions 822-832 (RKRVQQPKKLQ) are enriched in basic residues. The span at 833–842 (RGPEDPGPEE) shows a compositional bias: basic and acidic residues. Positions 1085 to 1217 (PYWIEFDWTR…TSPSVPNDYV (133 aa)) constitute a RdRp catalytic domain.

Belongs to the astroviridae polyprotein 1AB family. As to quaternary structure, monomer. In terms of processing, cleaved by the viral and host proteases. The protease is probably autocatalytically cleaved.

It localises to the host membrane. It carries out the reaction RNA(n) + a ribonucleoside 5'-triphosphate = RNA(n+1) + diphosphate. In terms of biological role, responsible for the cleavage of the polyprotein into functional products. Protein covalently attached to the 5' extremity of the genomic and subgenomic RNAs. It may serve as a primer for the replicase. The protein is Non-structural polyprotein 1AB (ORF1) of Ovis aries (Sheep).